Consider the following 107-residue polypeptide: MLTIEPPSATFPASGGSSTHTITSVNESRMAFKVKSSNNEHYRVRPVYGFVEARGKMKFEIIRLEGPVKDDKIMLQYAEVPADETDAQAPFKAGAQQGDVTILLKTN.

The interval 1 to 20 (MLTIEPPSATFPASGGSSTH) is disordered. Residues 1–107 (MLTIEPPSAT…GDVTILLKTN (107 aa)) enclose the MSP domain.

In terms of tissue distribution, expressed at higher level in testis.

In Caenorhabditis elegans, this protein is Sperm-specific class P protein 32 (ssp-32).